A 227-amino-acid chain; its full sequence is Urease accessory protein UreF (227 aa).

It belongs to the UreF family. In terms of assembly, ureD, UreF and UreG form a complex that acts as a GTP-hydrolysis-dependent molecular chaperone, activating the urease apoprotein by helping to assemble the nickel containing metallocenter of UreC. The UreE protein probably delivers the nickel.

The protein localises to the cytoplasm. Functionally, required for maturation of urease via the functional incorporation of the urease nickel metallocenter. The polypeptide is Urease accessory protein UreF (Methylobacillus flagellatus (strain ATCC 51484 / DSM 6875 / VKM B-1610 / KT)).